We begin with the raw amino-acid sequence, 755 residues long: MSVTEIEEGIFESTATIDNGSFGTRTIRFETGRLALQAAGSVVAYLDDETMLLSTTAASKTPKDHFDFFPLTVDVEERMYAAGRIPGSFFRREGRPSTDAILTCRLIDRPLRPSFVSGLRNEIQVVVTVLSLNPADLYDVLAINAASASTQLAGLPFSGPVGGVRVALIEGQWVAFPTVEQLEKAVFDMVVAGRKVGTAGDSDVAIMMVEAEATDNVIALIDGGAGAPTETVVAEGLEAAKPFIAALCTAQEELAGSAAKPTGEFPLFPDYQDDVYAAVAAVATEPLSQALSIAGKAERDEKTDEIKVDVLGRLQEGFDGREKEIGAAFRSLTKKLVRQRILKDQFRIDGRGVTDIRALSAEVAVIPRAHGSALFERGETQIMGVTTLDMIKMAQQVDSLGPETTKRYMHHYNFPPFSTGETGRVGSPKRREIGHGALAERALIPVLPSIEEFPYAIRQVSEALGSNGSTSMGSVCASTLALLNAGVPLKAPVAGIAMGLVSDDIELADGTAERRFVALTDILGAEDAFGDMDFKVAGTKDFVTALQLDTKLDGIPSQVLAAALSQAKDARTTILEVMAEAIDAPDEMSPYAPRITTIKVPVDKIGEVIGPKGKMINSITEETGANISIEDDGTVFVGAADGASAQAAIDKINAIANPQLPKIGERFLGTVVKTTDFGAFVSLLPGRDGLVHISKLGKGKRIAKVEDVVKVGDKIQVEIADIDNRGKISLVPVGEEDAAEAPAPAEAQPADAVTQ.

D527 and D533 together coordinate Mg(2+). One can recognise a KH domain in the interval 593–652 (PRITTIKVPVDKIGEVIGPKGKMINSITEETGANISIEDDGTVFVGAADGASAQAAIDKI). The S1 motif domain maps to 664 to 733 (GERFLGTVVK…NRGKISLVPV (70 aa)). Residues 734 to 755 (GEEDAAEAPAPAEAQPADAVTQ) are disordered. Positions 740 to 755 (EAPAPAEAQPADAVTQ) are enriched in low complexity.

The protein belongs to the polyribonucleotide nucleotidyltransferase family. Requires Mg(2+) as cofactor.

It is found in the cytoplasm. The catalysed reaction is RNA(n+1) + phosphate = RNA(n) + a ribonucleoside 5'-diphosphate. In terms of biological role, involved in mRNA degradation. Catalyzes the phosphorolysis of single-stranded polyribonucleotides processively in the 3'- to 5'-direction. The polypeptide is Polyribonucleotide nucleotidyltransferase (Mycobacteroides abscessus (strain ATCC 19977 / DSM 44196 / CCUG 20993 / CIP 104536 / JCM 13569 / NCTC 13031 / TMC 1543 / L948) (Mycobacterium abscessus)).